Reading from the N-terminus, the 283-residue chain is uncharacterized protein (283 aa).

Transmembrane regions (helical) follow at residues 11–31 (LFAYFSGLIAALSLFIYYVSA), 35–55 (EGALILCITFGVIAAGIWFGP), 56–76 (IYALAVTLIVLFVLGTLMMFF), and 93–113 (LVVWGIALLLFSFISGRIHDI). The GGDEF domain maps to 162–283 (NSFVFLLLHM…LENEMMMNEL (122 aa)).

It is found in the cell membrane. This is an uncharacterized protein from Bacillus subtilis (strain 168).